Here is a 318-residue protein sequence, read N- to C-terminus: Protein-methionine-sulfoxide reductase catalytic subunit MsrP (318 aa).

The segment at residues 1–40 is a signal peptide (tat-type signal); the sequence is MNRFTRYDVTPEVIFNQRRQIIKAMGLGAAALSLPNIGFA. Mo-molybdopterin-binding positions include N72, 75 to 76, C130, T165, N217, R222, and 233 to 235; these read YE and SIK.

Belongs to the MsrP family. Heterodimer of a catalytic subunit (MsrP) and a heme-binding subunit (MsrQ). Mo-molybdopterin is required as a cofactor. Post-translationally, predicted to be exported by the Tat system. The position of the signal peptide cleavage has not been experimentally proven.

Its subcellular location is the periplasm. It catalyses the reaction L-methionyl-[protein] + a quinone + H2O = L-methionyl-(S)-S-oxide-[protein] + a quinol. It carries out the reaction L-methionyl-[protein] + a quinone + H2O = L-methionyl-(R)-S-oxide-[protein] + a quinol. Its function is as follows. Part of the MsrPQ system that repairs oxidized periplasmic proteins containing methionine sulfoxide residues (Met-O), using respiratory chain electrons. Thus protects these proteins from oxidative-stress damage caused by reactive species of oxygen and chlorine generated by the host defense mechanisms. MsrPQ is essential for the maintenance of envelope integrity under bleach stress, rescuing a wide series of structurally unrelated periplasmic proteins from methionine oxidation. The catalytic subunit MsrP is non-stereospecific, being able to reduce both (R-) and (S-) diastereoisomers of methionine sulfoxide. In Actinobacillus pleuropneumoniae serotype 3 (strain JL03), this protein is Protein-methionine-sulfoxide reductase catalytic subunit MsrP.